We begin with the raw amino-acid sequence, 277 residues long: uncharacterized protein (277 aa).

This sequence belongs to the BtpA family.

The protein resides in the mitochondrion. This is an uncharacterized protein from Caenorhabditis elegans.